The primary structure comprises 422 residues: Protein IQ-DOMAIN 5 (422 aa).

Positions 23 to 30 (SKKDENVK) match the Nuclear localization signal motif. IQ domains are found at residues 87-115 (ENRA…GLVR), 116-138 (LQAL…CMQA), and 139-164 (LVRV…TSQQ). A calmodulin-binding region spans residues 137-151 (QALVRVQARVRARRV). Residues 269-422 (GENGMEQSEN…NSDPIKQRLA (154 aa)) are disordered. Positions 273 to 308 (MEQSENVPKTQIKSVSKMPNTSNLVSGVSSQMTGPC) are enriched in polar residues. Positions 310 to 327 (SDGDSSSPGISSSIPVVS) are enriched in low complexity. Residues 355–371 (NPKERSREPNRSSKERL) show a composition bias toward basic and acidic residues. Over residues 373-387 (LPNSGKSLGSQSTKA) the composition is skewed to polar residues. Over residues 412-422 (RNSDPIKQRLA) the composition is skewed to basic and acidic residues.

The protein belongs to the IQD family. In terms of assembly, binds to multiple calmodulin (CaM) in the presence of Ca(2+) and CaM-like proteins. In terms of tissue distribution, expressed mostly in vegetative tissues including older parts of the root, cotyledons, leaves and shoot apical meristems (SAM). Present at low levels in pollen, siliques and seeds.

The protein resides in the nucleus. It localises to the cytoplasm. Its subcellular location is the cytoskeleton. It is found in the spindle. The protein localises to the phragmoplast. In terms of biological role, may be involved in cooperative interactions with calmodulins or calmodulin-like proteins. Recruits calmodulin (CaM) calcium sensor proteins to cortical microtubule arrays, thus being a potential scaffold in cellular signaling and trafficking. Binds to microtubules (MTs) and promotes MT assembly and dynamics to modulate pavement cell (PC) morphogenesis via cellulose deposition-dependent anisotropic cell expansion triggered by cellulose synthase complexes (CSCs). May associate with nucleic acids and regulate gene expression at the transcriptional or post-transcriptional level. This is Protein IQ-DOMAIN 5 from Arabidopsis thaliana (Mouse-ear cress).